A 1470-amino-acid polypeptide reads, in one-letter code: ABC transporter G family member 48 (1470 aa).

The disordered stretch occupies residues 1-47; it reads MAAAPSASGRRSMSWGSSISQSFRQAEADDPFGRAASQQGHDDDEEN. The segment covering 9–24 has biased composition (polar residues); it reads GRRSMSWGSSISQSFR. The region spanning 172–445 is the ABC transporter 1 domain; the sequence is GLIGRFGSSN…FENAGFRCPE (274 aa). 205–212 provides a ligand contact to ATP; that stretch reads GPPSSGKS. One can recognise an ABC transmembrane type-2 1 domain in the interval 523 to 736; sequence ESLRAVMSRE…SQQAISINEF (214 aa). The next 6 helical transmembrane spans lie at 541–561, 577–597, 629–649, 660–680, 686–706, and 772–792; these read FIYI…MTVF, FLGA…AELQ, VPVS…VMGF, FIAF…LGAI, VANT…GFLI, and FWIS…LYIL. The tract at residues 828–852 is disordered; the sequence is QIVHNNGASNTSATSSIPMSGSRST. A compositionally biased stretch (low complexity) spans 832-843; that stretch reads NNGASNTSATSS. The ABC transporter 2 domain occupies 869–1121; it reads LCFNHVNYYV…KLVEYFEAVP (253 aa). Residue 914 to 921 coordinates ATP; the sequence is GVSGAGKT. Residues 1194 to 1408 form the ABC transmembrane type-2 2 domain; it reads SQCIANFWKQ…TIYGVVASQF (215 aa). Helical transmembrane passes span 1215-1234, 1249-1271, 1301-1321, 1331-1351, 1359-1379, 1389-1409, and 1439-1459; these read AMRY…VFWQ, LGAT…QPVV, VIYN…MIGY, FMFF…MLVA, ANIL…FLVV, WYYW…SQFG, and FLGY…FIFG.

The protein belongs to the ABC transporter superfamily. ABCG family. PDR (TC 3.A.1.205) subfamily.

The protein resides in the membrane. Functionally, may be a general defense protein. The chain is ABC transporter G family member 48 from Oryza sativa subsp. japonica (Rice).